Here is a 27-residue protein sequence, read N- to C-terminus: Potassium channel toxin alpha-KTx 9.11 (27 aa).

Cystine bridges form between C3-C19, C6-C23, and C10-C25.

The protein belongs to the short scorpion toxin superfamily. Potassium channel inhibitor family. Alpha-KTx 09 subfamily. Expressed by the venom gland.

Its subcellular location is the secreted. Functionally, may play a role in blocking voltage-gated potassium channels Kv1.2/KCNA2, Kv1.3/KCNA3 and Kv1.6/KCNA6 to a lesser extent. In Mesobuthus gibbosus (Mediterranean checkered scorpion), this protein is Potassium channel toxin alpha-KTx 9.11.